Here is a 450-residue protein sequence, read N- to C-terminus: Phosphoglucosamine mutase (450 aa).

The active-site Phosphoserine intermediate is the S104. 4 residues coordinate Mg(2+): S104, D245, D247, and D249. A Phosphoserine modification is found at S104.

The protein belongs to the phosphohexose mutase family. The cofactor is Mg(2+). Post-translationally, activated by phosphorylation.

The enzyme catalyses alpha-D-glucosamine 1-phosphate = D-glucosamine 6-phosphate. Functionally, catalyzes the conversion of glucosamine-6-phosphate to glucosamine-1-phosphate. The polypeptide is Phosphoglucosamine mutase (Phenylobacterium zucineum (strain HLK1)).